The chain runs to 928 residues: Arf guanine nucleotide exchange factor sec74 (928 aa).

2 stretches are compositionally biased toward polar residues: residues 1 to 12 (MDESSRIASSSA) and 57 to 83 (TITSDTPKVSSQHSPVSSAYTGDSTTD). Disordered stretches follow at residues 1–152 (MDES…RPSS) and 227–249 (SLSSNFSARTPASNQSSVSEDFG). Position 67 is a phosphoserine (Ser67). Composition is skewed to low complexity over residues 89–102 (GHSSSQKLSNKVSS) and 115–132 (SKSSSSQCSSPFLPTSSS). In terms of domain architecture, SEC7 spans 228-420 (LSSNFSARTP…ECFYDNITYT (193 aa)). The span at 234-245 (ARTPASNQSSVS) shows a compositional bias: polar residues. The PH domain occupies 548–677 (KVFKLGILIQ…WLVKINFVST (130 aa)).

The protein localises to the cytoplasm. It localises to the cell tip. In terms of biological role, guanine nucleotide exchange factor for Arf GTPases, stimulating the nucleotide exchange from the GDP-bound to the GTP-bound form. Involved in vesicular transport. This Schizosaccharomyces pombe (strain 972 / ATCC 24843) (Fission yeast) protein is Arf guanine nucleotide exchange factor sec74 (sec74).